Reading from the N-terminus, the 886-residue chain is DNA double-strand break repair Rad50 ATPase (886 aa).

Residues arginine 13, 33–39 (NGAGKSS), and glutamine 128 each bind ATP. Coiled-coil stretches lie at residues 183-360 (EQIK…LLET) and 400-433 (KEITEKLKKLIAKKSSLKTRGAQLKKAVEELKSA). The region spanning 392–489 (LSKAKEEEKE…RLEKVEKALE (98 aa)) is the Zinc-hook domain. Positions 437 and 440 each coordinate Zn(2+). Coiled-coil stretches lie at residues 489–518 (EKQETVLKYRQMVDELKALENELSSHDAEK) and 545–713 (SSAS…KKVE). An ATP-binding site is contributed by 792 to 797 (FLSGGE).

It belongs to the SMC family. RAD50 subfamily. As to quaternary structure, homodimer. Forms a heterotetramer composed of two Mre11 subunits and two Rad50 subunits. Zn(2+) serves as cofactor.

Functionally, part of the Rad50/Mre11 complex, which is involved in the early steps of DNA double-strand break (DSB) repair. The complex may facilitate opening of the processed DNA ends to aid in the recruitment of HerA and NurA. Rad50 controls the balance between DNA end bridging and DNA resection via ATP-dependent structural rearrangements of the Rad50/Mre11 complex. This Archaeoglobus fulgidus (strain ATCC 49558 / DSM 4304 / JCM 9628 / NBRC 100126 / VC-16) protein is DNA double-strand break repair Rad50 ATPase.